The primary structure comprises 320 residues: Serpentine receptor class gamma-17 (320 aa).

A run of 6 helical transmembrane segments spans residues Ala-25–Leu-45, Ile-80–Phe-100, Phe-155–Ala-175, Trp-192–Val-212, Phe-237–Ala-257, and Tyr-268–Leu-288.

Belongs to the nematode receptor-like protein srg family.

The protein resides in the membrane. The protein is Serpentine receptor class gamma-17 (srg-17) of Caenorhabditis elegans.